Reading from the N-terminus, the 254-residue chain is uncharacterized protein (254 aa).

Cysteine 71 (acyl-thioester intermediate) is an active-site residue. Active-site residues include histidine 110 and aspartate 125.

It belongs to the arylamine N-acetyltransferase family.

This is an uncharacterized protein from Bacillus subtilis (strain 168).